Here is a 233-residue protein sequence, read N- to C-terminus: Ion-translocating oxidoreductase complex subunit E (233 aa).

6 helical membrane-spanning segments follow: residues 18-38 (ALVQ…ATNA), 39-59 (LGLG…VSAL), 69-89 (IPIY…LINA), 92-112 (FGLY…CIVI), 128-148 (ALDG…LGAL), and 182-202 (PFLL…LLAG).

The protein belongs to the NqrDE/RnfAE family. As to quaternary structure, the complex is composed of six subunits: RnfA, RnfB, RnfC, RnfD, RnfE and RnfG.

The protein resides in the cell inner membrane. Its function is as follows. Part of a membrane-bound complex that couples electron transfer with translocation of ions across the membrane. This chain is Ion-translocating oxidoreductase complex subunit E, found in Yersinia pseudotuberculosis serotype O:1b (strain IP 31758).